The following is a 611-amino-acid chain: Dihydroxy-acid dehydratase (611 aa).

Position 81 (Asp-81) interacts with Mg(2+). Cys-122 contacts [2Fe-2S] cluster. Residues Asp-123 and Lys-124 each coordinate Mg(2+). Residue Lys-124 is modified to N6-carboxylysine. Cys-195 serves as a coordination point for [2Fe-2S] cluster. Mg(2+) is bound at residue Glu-491. The active-site Proton acceptor is Ser-517.

Belongs to the IlvD/Edd family. As to quaternary structure, homodimer. The cofactor is [2Fe-2S] cluster. Requires Mg(2+) as cofactor.

The catalysed reaction is (2R)-2,3-dihydroxy-3-methylbutanoate = 3-methyl-2-oxobutanoate + H2O. It carries out the reaction (2R,3R)-2,3-dihydroxy-3-methylpentanoate = (S)-3-methyl-2-oxopentanoate + H2O. It functions in the pathway amino-acid biosynthesis; L-isoleucine biosynthesis; L-isoleucine from 2-oxobutanoate: step 3/4. Its pathway is amino-acid biosynthesis; L-valine biosynthesis; L-valine from pyruvate: step 3/4. Functionally, functions in the biosynthesis of branched-chain amino acids. Catalyzes the dehydration of (2R,3R)-2,3-dihydroxy-3-methylpentanoate (2,3-dihydroxy-3-methylvalerate) into 2-oxo-3-methylpentanoate (2-oxo-3-methylvalerate) and of (2R)-2,3-dihydroxy-3-methylbutanoate (2,3-dihydroxyisovalerate) into 2-oxo-3-methylbutanoate (2-oxoisovalerate), the penultimate precursor to L-isoleucine and L-valine, respectively. The sequence is that of Dihydroxy-acid dehydratase from Glaesserella parasuis serovar 5 (strain SH0165) (Haemophilus parasuis).